The chain runs to 337 residues: S-adenosylmethionine:tRNA ribosyltransferase-isomerase (337 aa).

The protein belongs to the QueA family. In terms of assembly, monomer.

Its subcellular location is the cytoplasm. The enzyme catalyses 7-aminomethyl-7-carbaguanosine(34) in tRNA + S-adenosyl-L-methionine = epoxyqueuosine(34) in tRNA + adenine + L-methionine + 2 H(+). The protein operates within tRNA modification; tRNA-queuosine biosynthesis. In terms of biological role, transfers and isomerizes the ribose moiety from AdoMet to the 7-aminomethyl group of 7-deazaguanine (preQ1-tRNA) to give epoxyqueuosine (oQ-tRNA). This is S-adenosylmethionine:tRNA ribosyltransferase-isomerase from Legionella pneumophila (strain Corby).